Consider the following 431-residue polypeptide: Glucose-1-phosphate adenylyltransferase (431 aa).

Lysine 39 lines the beta-D-fructose 1,6-bisphosphate pocket. Residues arginine 40, histidine 46, and arginine 52 each contribute to the AMP site. Tyrosine 114 lines the alpha-D-glucose 1-phosphate pocket. An AMP-binding site is contributed by arginine 130. Residues glycine 179, 194 to 195 (EK), and serine 212 each bind alpha-D-glucose 1-phosphate. The AMP site is built by glutamate 370 and arginine 386. Residues 419 to 423 (REMLR) and 429 to 431 (QER) each bind beta-D-fructose 1,6-bisphosphate.

Belongs to the bacterial/plant glucose-1-phosphate adenylyltransferase family. Homotetramer.

It carries out the reaction alpha-D-glucose 1-phosphate + ATP + H(+) = ADP-alpha-D-glucose + diphosphate. Its pathway is glycan biosynthesis; glycogen biosynthesis. Allosterically activated by fructose-1,6-bisphosphate (F16BP) and inhibited by AMP. In terms of biological role, involved in the biosynthesis of ADP-glucose, a building block required for the elongation reactions to produce glycogen. Catalyzes the reaction between ATP and alpha-D-glucose 1-phosphate (G1P) to produce pyrophosphate and ADP-Glc. The sequence is that of Glucose-1-phosphate adenylyltransferase from Shigella dysenteriae serotype 1 (strain Sd197).